Here is a 58-residue protein sequence, read N- to C-terminus: Photosystem II reaction center protein K (58 aa).

A propeptide spanning residues 1–21 (MFNAYLDTVLDLSANGTVILA) is cleaved from the precursor. A helical membrane pass occupies residues 29-49 (IFDPIVDVMPIIPVFFLLLAF).

This sequence belongs to the PsbK family. As to quaternary structure, PSII is composed of 1 copy each of membrane proteins PsbA, PsbB, PsbC, PsbD, PsbE, PsbF, PsbH, PsbI, PsbJ, PsbK, PsbL, PsbM, PsbT, PsbX, PsbY, PsbZ, Psb30/Ycf12, at least 3 peripheral proteins of the oxygen-evolving complex and a large number of cofactors. It forms dimeric complexes.

Its subcellular location is the plastid. It localises to the chloroplast thylakoid membrane. In terms of biological role, one of the components of the core complex of photosystem II (PSII). PSII is a light-driven water:plastoquinone oxidoreductase that uses light energy to abstract electrons from H(2)O, generating O(2) and a proton gradient subsequently used for ATP formation. It consists of a core antenna complex that captures photons, and an electron transfer chain that converts photonic excitation into a charge separation. In Staurastrum punctulatum (Green alga), this protein is Photosystem II reaction center protein K.